A 184-amino-acid chain; its full sequence is ATP synthase subunit b, chloroplastic (184 aa).

Residues 27 to 49 traverse the membrane as a helical segment; that stretch reads LATNPINLSVVFGVLIFFGKGVL.

This sequence belongs to the ATPase B chain family. As to quaternary structure, F-type ATPases have 2 components, F(1) - the catalytic core - and F(0) - the membrane proton channel. F(1) has five subunits: alpha(3), beta(3), gamma(1), delta(1), epsilon(1). F(0) has four main subunits: a(1), b(1), b'(1) and c(10-14). The alpha and beta chains form an alternating ring which encloses part of the gamma chain. F(1) is attached to F(0) by a central stalk formed by the gamma and epsilon chains, while a peripheral stalk is formed by the delta, b and b' chains.

Its subcellular location is the plastid. It localises to the chloroplast thylakoid membrane. Its function is as follows. F(1)F(0) ATP synthase produces ATP from ADP in the presence of a proton or sodium gradient. F-type ATPases consist of two structural domains, F(1) containing the extramembraneous catalytic core and F(0) containing the membrane proton channel, linked together by a central stalk and a peripheral stalk. During catalysis, ATP synthesis in the catalytic domain of F(1) is coupled via a rotary mechanism of the central stalk subunits to proton translocation. Functionally, component of the F(0) channel, it forms part of the peripheral stalk, linking F(1) to F(0). In Barbarea verna (Land cress), this protein is ATP synthase subunit b, chloroplastic.